Reading from the N-terminus, the 156-residue chain is Ribonuclease H (156 aa).

The RNase H type-1 domain maps to 7–148 (QDKIVMIATD…ADQLASDAAI (142 aa)). Mg(2+) contacts are provided by Asp16, Glu54, Asp76, and Asp140.

The protein belongs to the RNase H family. As to quaternary structure, monomer. Requires Mg(2+) as cofactor.

Its subcellular location is the cytoplasm. The catalysed reaction is Endonucleolytic cleavage to 5'-phosphomonoester.. Functionally, endonuclease that specifically degrades the RNA of RNA-DNA hybrids. This Zymomonas mobilis subsp. mobilis (strain ATCC 31821 / ZM4 / CP4) protein is Ribonuclease H (rnhA).